The following is a 1060-amino-acid chain: Centrosomal protein of 131 kDa (1060 aa).

Polar residues predominate over residues 1-11; it reads MKGSRTITATP. Residues 1 to 96 are disordered; sequence MKGSRTITAT…TGSPRPAEPT (96 aa). The segment at 1 to 244 is interaction with PLK4; it reads MKGSRTITAT…SQSARGTTGL (244 aa). 2 positions are modified to phosphoserine: Ser-14 and Ser-35. 2 stretches are compositionally biased toward polar residues: residues 32 to 50 and 73 to 88; these read RPGSASATRSIFRSMSVAT and LRRSNSTTQVNQSWTG. Phosphoserine; by MAPKAPK2 is present on Ser-47. Phosphoserine; by MAPKAPK2 and PLK4 is present on Ser-78. A phosphoserine mark is found at Ser-89, Ser-105, Ser-114, Ser-146, and Ser-150. Disordered stretches follow at residues 136 to 155 and 217 to 248; these read LALPASAQSPSTLDSALGPR and EGGEGSDLGKPRKNLSSASQSARGTTGLLRRR. Positions 217-226 are enriched in basic and acidic residues; that stretch reads EGGEGSDLGK. In terms of domain architecture, IQ spans 263-283; it reads NQAAVTIQRWYRCQVQRRRAG. Composition is skewed to basic and acidic residues over residues 314–327 and 344–363; these read EEAARKKAREEKAR and KASEAEHRRPKDRPETRAPE. The tract at residues 314 to 437 is disordered; sequence EEAARKKARE…VSGSSRGKAR (124 aa). Residues 398 to 408 are compositionally biased toward low complexity; sequence ASESSPEQWQS. Positions 409–424 are enriched in basic and acidic residues; it reads PEDKPQDIHSQGEARQ. Thr-473 is modified (phosphothreonine). Phosphoserine is present on Ser-481.

The protein belongs to the CEP131 family. As to quaternary structure, self-associates. Associates with the centriolar satellite BBSome protein complex Interacts with BBS4; the interaction limits BBS4 availability for association with the BBSome complex, and hence negatively regulates ciliary localization of the BBSome complex. Interacts with MIB1. Interacts with PCM1; the interaction increases in response to ultraviolet light (UV) radiation. Associates with microtubule; association to microtubule is reduced in response to cellular stress, such as UV stimulation, in a process that requires p38 MAP kinase signaling. Interacts with CEP290, DCTN1, MAP1LC3B, PCNT, PCM1 and CEP152. Interacts with 14-3-3 proteins following UV-induced phosphorylation by MAPKAPK2; this inhibits formation of novel centriolar satellites. Interacts with SDCCAG8. Interacts with CCDC61. Interacts with PLK4. Ubiquitinated. Undergoes monoubiquitination catalyzed by the E3 ubiquitin-protein ligase MIB1 in proliferating cells, preventing cilia formation. Monoubiquitination by MIB1 is inhibited in response to cellular stress, such as ultraviolet light (UV) radiation or heat shock, resulting in ciliogenesis restoration. In terms of processing, MAPKAPK2-dependent phosphorylation at Ser-47 and Ser-78 occurs in response to cellular stress such as exposure to ultraviolet irradiation and promotes binding to 14-3-3 proteins which leads to cytoplasmic sequestration of CEP131 and blocks formation of new centriolar satellites. Phosphorylation at Ser-78 mediated by PLK4 is essential for proper organization and integrity of centriolar satellites but is dispensable for its localization to centrioles and its function in ciliogenesis. As to expression, localized to the pre-acrosome region of round and elongated spermatids in testis but also present in ovary, brain and adipose tissue.

The protein resides in the cytoplasm. Its subcellular location is the cytoskeleton. It localises to the microtubule organizing center. It is found in the centrosome. The protein localises to the centriolar satellite. The protein resides in the centriole. Its subcellular location is the cilium basal body. It localises to the cytoplasmic vesicle. It is found in the secretory vesicle. The protein localises to the acrosome. Its function is as follows. Component of centriolar satellites contributing to the building of a complex and dynamic network required to regulate cilia/flagellum formation. In proliferating cells, MIB1-mediated ubiquitination induces its sequestration within centriolar satellites, precluding untimely cilia formation initiation. In contrast, during normal and ultraviolet or heat shock cellular stress-induced ciliogenesis, its non-ubiquitinated form is rapidly displaced from centriolar satellites and recruited to centrosome/basal bodies in a microtubule- and p38 MAPK-dependent manner. Also acts as a negative regulator of BBSome ciliary trafficking. Plays a role in sperm flagellar formation; may be involved in the regulation of intraflagellar transport (IFT) and/or intramanchette (IMT) trafficking, which are important for axoneme extension and/or cargo delivery to the nascent sperm tail. Required for optimal cell proliferation and cell cycle progression; may play a role in the regulation of genome stability and centriole duplication in non-ciliogenic cells. Involved in centriole duplication. Required for CEP152, WDR62 and CEP63 centrosomal localization and promotes the centrosomal localization of CDK2. Essential for maintaining proper centriolar satellite integrity. The polypeptide is Centrosomal protein of 131 kDa (Cep131) (Mus musculus (Mouse)).